We begin with the raw amino-acid sequence, 997 residues long: Protein translocase subunit SecA (997 aa).

ATP is bound by residues Gln84, Gly102 to Thr106, and Asp582. A disordered region spans residues Pro950–Lys997. Basic and acidic residues predominate over residues Ala957–Arg971. Positions Glu984–Lys997 are enriched in basic residues.

It belongs to the SecA family. As to quaternary structure, part of the essential Sec protein translocation apparatus which comprises SecA, SecYEG and auxiliary proteins SecDF. Other proteins may also be involved. Monomer and homodimer.

Its subcellular location is the cell inner membrane. It localises to the cytoplasm. It catalyses the reaction ATP + H2O + cellular proteinSide 1 = ADP + phosphate + cellular proteinSide 2.. Part of the Sec protein translocase complex. Interacts with the SecYEG preprotein conducting channel. Has a central role in coupling the hydrolysis of ATP to the transfer of proteins into and across the cell membrane, serving as an ATP-driven molecular motor driving the stepwise translocation of polypeptide chains across the membrane. The protein is Protein translocase subunit SecA of Thermus thermophilus (strain ATCC 27634 / DSM 579 / HB8).